A 628-amino-acid chain; its full sequence is Modular serine protease (628 aa).

An N-terminal signal peptide occupies residues 1-25 (MQLISFLSNPLFFCALLLKFRTIFA). 4 consecutive LDL-receptor class A domains span residues 26 to 64 (ACDSSQFECDNGSCISQYDVCNGEKNCPDGSDETALTCV), 69 to 107 (HCTKPYFQCTYGACVIGTAGCNGVNECADGSDETRLRCG), 122 to 163 (NCKE…ELCG), and 166 to 204 (ECPAYSFKCGTGGCISGSLSCNGENDCYDGSDEAPLLCN). 12 disulfide bridges follow: Cys27–Cys39, Cys34–Cys52, Cys46–Cys63, Cys70–Cys82, Cys77–Cys95, Cys89–Cys106, Cys123–Cys135, Cys130–Cys149, Cys143–Cys162, Cys167–Cys179, Cys174–Cys192, and Cys186–Cys203. Asn36 carries an N-linked (GlcNAc...) asparagine glycan. Residue Asn204 is glycosylated (N-linked (GlcNAc...) asparagine). Sushi domains follow at residues 222–285 (LGCP…KCVK) and 300–356 (ALCT…RCEQ). Intrachain disulfides connect Cys224/Cys270, Cys256/Cys283, Cys302/Cys341, and Cys326/Cys354. In terms of domain architecture, Peptidase S1 spans 369-621 (SSGGYTINNT…FEDMILNAMN (253 aa)). Asn376 is a glycosylation site (N-linked (GlcNAc...) asparagine). An intrachain disulfide couples Cys399 to Cys415. Active-site charge relay system residues include His414, Asp472, and Ser563. A glycan (N-linked (GlcNAc...) asparagine) is linked at Asn621.

Belongs to the peptidase S1 family. Post-translationally, may be proteolytically cleaved via an autocatalytic mechanism.

The protein localises to the secreted. Its function is as follows. Serine protease that plays a key role in innate immunity by activating the Toll pathway in response to infection with Gram-positive bacteria and fungi. During Gram-positive infection, acts downstream of PGRP-SA and upstream of Grass and Spz, and therefore appears to function in a pathway that links detection of Gram-positive lysine-type peptidoglycans to Toll activation. Functions in a separate pathway to the psh-mediated activation of the Toll pathway. In Drosophila melanogaster (Fruit fly), this protein is Modular serine protease.